Here is a 206-residue protein sequence, read N- to C-terminus: Probable thymidylate kinase (206 aa).

Position 7–14 (7–14) interacts with ATP; sequence GIDGSGKS.

Belongs to the thymidylate kinase family.

It catalyses the reaction dTMP + ATP = dTDP + ADP. The chain is Probable thymidylate kinase from Methanospirillum hungatei JF-1 (strain ATCC 27890 / DSM 864 / NBRC 100397 / JF-1).